The sequence spans 129 residues: Translation initiation factor 5A (129 aa).

Lys36 bears the Hypusine mark.

This sequence belongs to the eIF-5A family.

Its subcellular location is the cytoplasm. Functionally, functions by promoting the formation of the first peptide bond. This chain is Translation initiation factor 5A, found in Picrophilus torridus (strain ATCC 700027 / DSM 9790 / JCM 10055 / NBRC 100828 / KAW 2/3).